Consider the following 179-residue polypeptide: MLGLAAEENVLRIHIDELVFGLIAFAVIFALVYRYAVPRVTKMLDERADAIEGGIERAKKAEAEAEELRQQFQEKLEEAHRSYAAELQKASEQSAAIIAEAREEAQAEARRIIEAAHAQIEADRQQAMAQLRAEIGALSADLAARIVGETLSDPAAQSRVIDRFLAELESGANQQAEVR.

A helical transmembrane segment spans residues I13–Y33.

It belongs to the ATPase B chain family. In terms of assembly, F-type ATPases have 2 components, F(1) - the catalytic core - and F(0) - the membrane proton channel. F(1) has five subunits: alpha(3), beta(3), gamma(1), delta(1), epsilon(1). F(0) has three main subunits: a(1), b(2) and c(10-14). The alpha and beta chains form an alternating ring which encloses part of the gamma chain. F(1) is attached to F(0) by a central stalk formed by the gamma and epsilon chains, while a peripheral stalk is formed by the delta and b chains.

It localises to the cell membrane. Functionally, f(1)F(0) ATP synthase produces ATP from ADP in the presence of a proton or sodium gradient. F-type ATPases consist of two structural domains, F(1) containing the extramembraneous catalytic core and F(0) containing the membrane proton channel, linked together by a central stalk and a peripheral stalk. During catalysis, ATP synthesis in the catalytic domain of F(1) is coupled via a rotary mechanism of the central stalk subunits to proton translocation. Component of the F(0) channel, it forms part of the peripheral stalk, linking F(1) to F(0). The protein is ATP synthase subunit b of Thermobifida fusca (strain YX).